The sequence spans 151 residues: U1 small nuclear ribonucleoprotein C (151 aa).

The Matrin-type zinc finger occupies Tyr-4–Phe-36.

It belongs to the U1 small nuclear ribonucleoprotein C family. In terms of assembly, U1 snRNP is composed of the 7 core Sm proteins B/B', D1, D2, D3, E, F and G that assemble in a heptameric protein ring on the Sm site of the small nuclear RNA to form the core snRNP, and at least 3 U1 snRNP-specific proteins U1-70K, U1-A and U1-C. U1-C interacts with U1 snRNA and the 5' splice-site region of the pre-mRNA.

The protein resides in the nucleus. Its function is as follows. Component of the spliceosomal U1 snRNP, which is essential for recognition of the pre-mRNA 5' splice-site and the subsequent assembly of the spliceosome. U1-C is directly involved in initial 5' splice-site recognition for both constitutive and regulated alternative splicing. The interaction with the 5' splice-site seems to precede base-pairing between the pre-mRNA and the U1 snRNA. Stimulates commitment or early (E) complex formation by stabilizing the base pairing of the 5' end of the U1 snRNA and the 5' splice-site region. The sequence is that of U1 small nuclear ribonucleoprotein C from Anopheles darlingi (Mosquito).